Consider the following 120-residue polypeptide: Ribonuclease P protein component (120 aa).

The protein belongs to the RnpA family. Consists of a catalytic RNA component (M1 or rnpB) and a protein subunit.

It carries out the reaction Endonucleolytic cleavage of RNA, removing 5'-extranucleotides from tRNA precursor.. Its function is as follows. RNaseP catalyzes the removal of the 5'-leader sequence from pre-tRNA to produce the mature 5'-terminus. It can also cleave other RNA substrates such as 4.5S RNA. The protein component plays an auxiliary but essential role in vivo by binding to the 5'-leader sequence and broadening the substrate specificity of the ribozyme. In Microcystis aeruginosa (strain NIES-843 / IAM M-2473), this protein is Ribonuclease P protein component.